Here is a 1004-residue protein sequence, read N- to C-terminus: Zinc finger protein 316 (1004 aa).

The disordered stretch occupies residues 1–148 (MAALHTTPDS…EEEEDEDEDD (148 aa)). A2 carries the post-translational modification N-acetylalanine. A Phosphothreonine modification is found at T7. S10 carries the phosphoserine modification. Over residues 21–60 (GSECDPDQEEEEEEEEKGEEVQEVEEEEEEIVVEEEEEGV) the composition is skewed to acidic residues. Residues 61–72 (AEVVQDAQVEAV) are compositionally biased toward low complexity. The span at 73–95 (AEVEVEADVEEEDVKEVLAEEEC) shows a compositional bias: acidic residues. S112 is subject to Phosphoserine. Acidic residues predominate over residues 132–148 (EDLEEEEEEEEDEDEDD). One can recognise a KRAB domain in the interval 158 to 229 (VTFEDVAVYF…DSPRPEEGDI (72 aa)). 5 consecutive C2H2-type zinc fingers follow at residues 345-367 (TTCD…QRYH), 373-395 (FGCE…QRTH), 401-423 (FPCP…RRIH), 429-451 (YRCA…QRTH), and 457-479 (YPCS…QAVH). The C2H2-type 6; degenerate zinc-finger motif lies at 485 to 512 (HCCPDCGQAFRLRADFQRHRRGGGCAEA). The interval 508 to 574 (GCAEAGGDGP…TPSGKVDPAP (67 aa)) is disordered. The segment covering 531-557 (EDTDPGPEGSEVGEADGEAEAAAEERE) has biased composition (acidic residues). 5 C2H2-type zinc fingers span residues 691–713 (WICS…QRYH), 719–741 (HRCA…RRTH), 747–769 (FPCP…VRGH), 775–797 (FVCG…GRAH), and 803–825 (YACG…QWAH). K829 is covalently cross-linked (Glycyl lysine isopeptide (Lys-Gly) (interchain with G-Cter in SUMO2)). 4 C2H2-type zinc fingers span residues 831 to 853 (HRCP…RRTH), 859 to 881 (FRCA…RRGH), 887 to 909 (FPCP…QRTH), and 915 to 937 (YACA…MKTH). Positions 936–976 (THRGATAAPGSGSAPAPAPKPEAAAKGPSSAGPGERGSALL) are disordered. A compositionally biased stretch (low complexity) spans 939 to 968 (GATAAPGSGSAPAPAPKPEAAAKGPSSAGP). Residue K955 forms a Glycyl lysine isopeptide (Lys-Gly) (interchain with G-Cter in SUMO2) linkage.

The protein belongs to the krueppel C2H2-type zinc-finger protein family.

Its subcellular location is the nucleus. May be involved in transcriptional regulation. The sequence is that of Zinc finger protein 316 (ZNF316) from Homo sapiens (Human).